Here is a 549-residue protein sequence, read N- to C-terminus: Glucose-6-phosphate isomerase (549 aa).

Catalysis depends on E355, which acts as the Proton donor. Catalysis depends on residues H387 and K515.

This sequence belongs to the GPI family.

The protein localises to the cytoplasm. The enzyme catalyses alpha-D-glucose 6-phosphate = beta-D-fructose 6-phosphate. The protein operates within carbohydrate biosynthesis; gluconeogenesis. Its pathway is carbohydrate degradation; glycolysis; D-glyceraldehyde 3-phosphate and glycerone phosphate from D-glucose: step 2/4. Functionally, catalyzes the reversible isomerization of glucose-6-phosphate to fructose-6-phosphate. This is Glucose-6-phosphate isomerase from Haemophilus influenzae (strain ATCC 51907 / DSM 11121 / KW20 / Rd).